Here is a 278-residue protein sequence, read N- to C-terminus: Phosphatidylglycerol--prolipoprotein diacylglyceryl transferase (278 aa).

Helical transmembrane passes span 18-38, 55-75, 90-110, and 115-135; these read IQVH…TILA, LILW…VIFE, WDGG…VYLF, and WIPV…AQGI. Arg-137 provides a ligand contact to a 1,2-diacyl-sn-glycero-3-phospho-(1'-sn-glycerol). Transmembrane regions (helical) follow at residues 177–197, 207–227, and 237–257; these read QPTF…LMSL, GEVF…VEGM, and IRVS…ILVF.

The protein belongs to the Lgt family.

Its subcellular location is the cell membrane. It carries out the reaction L-cysteinyl-[prolipoprotein] + a 1,2-diacyl-sn-glycero-3-phospho-(1'-sn-glycerol) = an S-1,2-diacyl-sn-glyceryl-L-cysteinyl-[prolipoprotein] + sn-glycerol 1-phosphate + H(+). The protein operates within protein modification; lipoprotein biosynthesis (diacylglyceryl transfer). Catalyzes the transfer of the diacylglyceryl group from phosphatidylglycerol to the sulfhydryl group of the N-terminal cysteine of a prolipoprotein, the first step in the formation of mature lipoproteins. In Pediococcus pentosaceus (strain ATCC 25745 / CCUG 21536 / LMG 10740 / 183-1w), this protein is Phosphatidylglycerol--prolipoprotein diacylglyceryl transferase.